A 615-amino-acid polypeptide reads, in one-letter code: Zinc metalloproteinase-disintegrin-like (615 aa).

Residues 1 to 20 form the signal peptide; sequence MIQALLVTICLVGFPHQGSS. A propeptide spanning residues 21 to 195 is cleaved from the precursor; the sequence is IILESGNVKD…KMNFQSANNP (175 aa). A Peptidase M12B domain is found at 204-400; sequence KYIKLAVVVD…DLPQCILNKP (197 aa). 3 cysteine pairs are disulfide-bonded: Cys315–Cys395, Cys355–Cys379, and Cys357–Cys362. His340 contributes to the Zn(2+) binding site. Glu341 is a catalytic residue. Zn(2+) contacts are provided by His344 and His350. The Disintegrin domain maps to 408–494; the sequence is PAVCGNNFVE…DCPMDGLQRN (87 aa). Residues Val410, Asn413, Phe415, Glu417, and Asp423 each contribute to the Ca(2+) site. 14 cysteine pairs are disulfide-bonded: Cys411–Cys440, Cys422–Cys435, Cys424–Cys430, Cys434–Cys457, Cys448–Cys454, Cys453–Cys479, Cys466–Cys486, Cys473–Cys505, Cys498–Cys510, Cys517–Cys567, Cys532–Cys576, Cys545–Cys555, Cys562–Cys602, and Cys596–Cys608. The D/ECD-tripeptide motif lies at 472 to 474; it reads DCD.

This sequence belongs to the venom metalloproteinase (M12B) family. P-III subfamily. P-IIIa sub-subfamily. In terms of assembly, monomer. Zn(2+) serves as cofactor. Expressed by the venom gland.

It is found in the secreted. In terms of biological role, snake venom zinc metalloprotease that may induce platelet aggregation. The polypeptide is Zinc metalloproteinase-disintegrin-like (Cerberus rynchops (Dog-faced water snake)).